We begin with the raw amino-acid sequence, 465 residues long: ATP synthase subunit beta (465 aa).

152 to 159 (GGAGVGKT) contributes to the ATP binding site.

The protein belongs to the ATPase alpha/beta chains family. F-type ATPases have 2 components, CF(1) - the catalytic core - and CF(0) - the membrane proton channel. CF(1) has five subunits: alpha(3), beta(3), gamma(1), delta(1), epsilon(1). CF(0) has three main subunits: a(1), b(2) and c(9-12). The alpha and beta chains form an alternating ring which encloses part of the gamma chain. CF(1) is attached to CF(0) by a central stalk formed by the gamma and epsilon chains, while a peripheral stalk is formed by the delta and b chains.

It localises to the cell membrane. The enzyme catalyses ATP + H2O + 4 H(+)(in) = ADP + phosphate + 5 H(+)(out). Functionally, produces ATP from ADP in the presence of a proton gradient across the membrane. The catalytic sites are hosted primarily by the beta subunits. The sequence is that of ATP synthase subunit beta from Ruminiclostridium cellulolyticum (strain ATCC 35319 / DSM 5812 / JCM 6584 / H10) (Clostridium cellulolyticum).